A 304-amino-acid polypeptide reads, in one-letter code: N-acetylmuramic acid 6-phosphate etherase 1 (304 aa).

A compositionally biased stretch (polar residues) spans 1-10 (MENSHLGSLT). Residues 1 to 20 (MENSHLGSLTTERRNERSKR) form a disordered region. An SIS domain is found at 58–221 (AVGSLKKGGR…STAAMIKMGK (164 aa)). Glutamate 86 (proton donor) is an active-site residue. Glutamate 117 is an active-site residue.

The protein belongs to the GCKR-like family. MurNAc-6-P etherase subfamily. As to quaternary structure, homodimer.

The enzyme catalyses N-acetyl-D-muramate 6-phosphate + H2O = N-acetyl-D-glucosamine 6-phosphate + (R)-lactate. It participates in amino-sugar metabolism; N-acetylmuramate degradation. Its function is as follows. Specifically catalyzes the cleavage of the D-lactyl ether substituent of MurNAc 6-phosphate, producing GlcNAc 6-phosphate and D-lactate. This chain is N-acetylmuramic acid 6-phosphate etherase 1, found in Bacillus licheniformis (strain ATCC 14580 / DSM 13 / JCM 2505 / CCUG 7422 / NBRC 12200 / NCIMB 9375 / NCTC 10341 / NRRL NRS-1264 / Gibson 46).